Reading from the N-terminus, the 564-residue chain is Proline--tRNA ligase 1 (564 aa).

Belongs to the class-II aminoacyl-tRNA synthetase family. ProS type 1 subfamily. As to quaternary structure, homodimer.

The protein localises to the cytoplasm. The enzyme catalyses tRNA(Pro) + L-proline + ATP = L-prolyl-tRNA(Pro) + AMP + diphosphate. In terms of biological role, catalyzes the attachment of proline to tRNA(Pro) in a two-step reaction: proline is first activated by ATP to form Pro-AMP and then transferred to the acceptor end of tRNA(Pro). As ProRS can inadvertently accommodate and process non-cognate amino acids such as alanine and cysteine, to avoid such errors it has two additional distinct editing activities against alanine. One activity is designated as 'pretransfer' editing and involves the tRNA(Pro)-independent hydrolysis of activated Ala-AMP. The other activity is designated 'posttransfer' editing and involves deacylation of mischarged Ala-tRNA(Pro). The misacylated Cys-tRNA(Pro) is not edited by ProRS. In Streptomyces avermitilis (strain ATCC 31267 / DSM 46492 / JCM 5070 / NBRC 14893 / NCIMB 12804 / NRRL 8165 / MA-4680), this protein is Proline--tRNA ligase 1.